Consider the following 707-residue polypeptide: Polyribonucleotide nucleotidyltransferase (707 aa).

Residues aspartate 491 and aspartate 497 each coordinate Mg(2+). The 60-residue stretch at 558–617 folds into the KH domain; the sequence is PRIEKIKIHPDKIGLLIGPGGKTIKKISAESGAEITIEDDGTVMIYSSSADSLEAAREMI. Residues 622–695 form the S1 motif domain; sequence GEVTVGGIYR…EKGRYKFSRK (74 aa).

It belongs to the polyribonucleotide nucleotidyltransferase family. Mg(2+) serves as cofactor.

It is found in the cytoplasm. The catalysed reaction is RNA(n+1) + phosphate = RNA(n) + a ribonucleoside 5'-diphosphate. Functionally, involved in mRNA degradation. Catalyzes the phosphorolysis of single-stranded polyribonucleotides processively in the 3'- to 5'-direction. This is Polyribonucleotide nucleotidyltransferase from Methylacidiphilum infernorum (isolate V4) (Methylokorus infernorum (strain V4)).